Consider the following 148-residue polypeptide: Pseudoazurin (148 aa).

Positions 1–25 (MMIFRALIAAATLAIAIATTLPAAA) are cleaved as a signal peptide. The region spanning 30-118 (VKMLNSGPGG…MGMVALVVVG (89 aa)) is the Plastocyanin-like domain. His65, Cys103, His106, and Met111 together coordinate Cu cation.

It depends on Cu cation as a cofactor.

The protein resides in the periplasm. The protein is Pseudoazurin of Methylorubrum extorquens (strain ATCC 14718 / DSM 1338 / JCM 2805 / NCIMB 9133 / AM1) (Methylobacterium extorquens).